Consider the following 245-residue polypeptide: Ribonuclease PH (245 aa).

Residues Arg-93 and 131–133 contribute to the phosphate site; that span reads GTR.

This sequence belongs to the RNase PH family. As to quaternary structure, homohexameric ring arranged as a trimer of dimers.

The enzyme catalyses tRNA(n+1) + phosphate = tRNA(n) + a ribonucleoside 5'-diphosphate. Phosphorolytic 3'-5' exoribonuclease that plays an important role in tRNA 3'-end maturation. Removes nucleotide residues following the 3'-CCA terminus of tRNAs; can also add nucleotides to the ends of RNA molecules by using nucleoside diphosphates as substrates, but this may not be physiologically important. Probably plays a role in initiation of 16S rRNA degradation (leading to ribosome degradation) during starvation. This is Ribonuclease PH from Corynebacterium glutamicum (strain ATCC 13032 / DSM 20300 / JCM 1318 / BCRC 11384 / CCUG 27702 / LMG 3730 / NBRC 12168 / NCIMB 10025 / NRRL B-2784 / 534).